A 247-amino-acid polypeptide reads, in one-letter code: 3-deoxy-manno-octulosonate cytidylyltransferase (247 aa).

Belongs to the KdsB family.

It is found in the cytoplasm. It catalyses the reaction 3-deoxy-alpha-D-manno-oct-2-ulosonate + CTP = CMP-3-deoxy-beta-D-manno-octulosonate + diphosphate. It functions in the pathway nucleotide-sugar biosynthesis; CMP-3-deoxy-D-manno-octulosonate biosynthesis; CMP-3-deoxy-D-manno-octulosonate from 3-deoxy-D-manno-octulosonate and CTP: step 1/1. It participates in bacterial outer membrane biogenesis; lipopolysaccharide biosynthesis. In terms of biological role, activates KDO (a required 8-carbon sugar) for incorporation into bacterial lipopolysaccharide in Gram-negative bacteria. The polypeptide is 3-deoxy-manno-octulosonate cytidylyltransferase (Pelodictyon phaeoclathratiforme (strain DSM 5477 / BU-1)).